We begin with the raw amino-acid sequence, 223 residues long: Phosphoribosylformylglycinamidine synthase subunit PurQ (223 aa).

The 220-residue stretch at 4–223 folds into the Glutamine amidotransferase type-1 domain; it reads FAVIVFPGTN…FKSIVEWMKK (220 aa). Cys-85 (nucleophile) is an active-site residue. Active-site residues include His-196 and Glu-198.

Part of the FGAM synthase complex composed of 1 PurL, 1 PurQ and 2 PurS subunits.

The protein localises to the cytoplasm. The enzyme catalyses N(2)-formyl-N(1)-(5-phospho-beta-D-ribosyl)glycinamide + L-glutamine + ATP + H2O = 2-formamido-N(1)-(5-O-phospho-beta-D-ribosyl)acetamidine + L-glutamate + ADP + phosphate + H(+). The catalysed reaction is L-glutamine + H2O = L-glutamate + NH4(+). Its pathway is purine metabolism; IMP biosynthesis via de novo pathway; 5-amino-1-(5-phospho-D-ribosyl)imidazole from N(2)-formyl-N(1)-(5-phospho-D-ribosyl)glycinamide: step 1/2. Part of the phosphoribosylformylglycinamidine synthase complex involved in the purines biosynthetic pathway. Catalyzes the ATP-dependent conversion of formylglycinamide ribonucleotide (FGAR) and glutamine to yield formylglycinamidine ribonucleotide (FGAM) and glutamate. The FGAM synthase complex is composed of three subunits. PurQ produces an ammonia molecule by converting glutamine to glutamate. PurL transfers the ammonia molecule to FGAR to form FGAM in an ATP-dependent manner. PurS interacts with PurQ and PurL and is thought to assist in the transfer of the ammonia molecule from PurQ to PurL. The chain is Phosphoribosylformylglycinamidine synthase subunit PurQ from Pyrococcus horikoshii (strain ATCC 700860 / DSM 12428 / JCM 9974 / NBRC 100139 / OT-3).